The sequence spans 496 residues: Angiopoietin-2 (496 aa).

An N-terminal signal peptide occupies residues 1–18; the sequence is MWQIIFLTFGWDLVLASA. N-linked (GlcNAc...) asparagine glycosylation is found at asparagine 89, asparagine 119, asparagine 133, asparagine 151, asparagine 240, and asparagine 304. Positions 159–256 form a coiled coil; it reads QLLQHSISTN…QQHDLMETVN (98 aa). The region spanning 275–495 is the Fibrinogen C-terminal domain; it reads KEEQTTFRDC…ATTMMIRPAD (221 aa). Cysteine 284 and cysteine 313 form a disulfide bridge. The Ca(2+) site is built by aspartate 429, aspartate 431, cysteine 433, and cysteine 435. Intrachain disulfides connect cysteine 433/cysteine 435 and cysteine 437/cysteine 450.

Interacts with TEK/TIE2, competing for the same binding site as ANGPT1. Interacts with ITGA5. Interacts with SVEP1/polydom. Interacts with THBD; this interaction significantly inhibits the generation of activated PC and TAFIa/CPB2 by the thrombin/thrombomodulin complex. As to expression, expressed in the ovary, uterus and placenta.

The protein resides in the secreted. Its function is as follows. Binds to TEK/TIE2, competing for the ANGPT1 binding site, and modulating ANGPT1 signaling. Can induce tyrosine phosphorylation of TEK/TIE2 in the absence of ANGPT1. In the absence of angiogenic inducers, such as VEGF, ANGPT2-mediated loosening of cell-matrix contacts may induce endothelial cell apoptosis with consequent vascular regression. In concert with VEGF, it may facilitate endothelial cell migration and proliferation, thus serving as a permissive angiogenic signal. Involved in the regulation of lymphangiogenesis. This chain is Angiopoietin-2 (Angpt2), found in Mus musculus (Mouse).